The primary structure comprises 438 residues: GTPase Obg (438 aa).

Positions 1 to 159 (MAFRDVLNIE…RRVRLELRLI (159 aa)) constitute an Obg domain. Residues 160–332 (ADVGLVGYPN…LRETLFQLLP (173 aa)) form the OBG-type G domain. ATP is bound by residues 166–173 (GYPNAGKS), 191–195 (FTTLS), 219–222 (DIPG), 285–288 (NKVE), and 313–315 (SAK). Residues Ser-173 and Thr-193 each coordinate Mg(2+). Positions 357 to 435 (IVFREDAPAK…IGTFRFEYFD (79 aa)) constitute an OCT domain.

The protein belongs to the TRAFAC class OBG-HflX-like GTPase superfamily. OBG GTPase family. In terms of assembly, monomer. Mg(2+) serves as cofactor.

It is found in the cytoplasm. Functionally, an essential GTPase which binds GTP, GDP and possibly (p)ppGpp with moderate affinity, with high nucleotide exchange rates and a fairly low GTP hydrolysis rate. Plays a role in control of the cell cycle, stress response, ribosome biogenesis and in those bacteria that undergo differentiation, in morphogenesis control. The chain is GTPase Obg from Deinococcus radiodurans (strain ATCC 13939 / DSM 20539 / JCM 16871 / CCUG 27074 / LMG 4051 / NBRC 15346 / NCIMB 9279 / VKM B-1422 / R1).